Here is a 525-residue protein sequence, read N- to C-terminus: Phospho-2-dehydro-3-deoxyheptonate aldolase 1, chloroplastic (525 aa).

The segment covering 1 to 13 has biased composition (polar residues); it reads MALSNASSLSTRS. Residues 1–35 form a disordered region; the sequence is MALSNASSLSTRSIYGGDLSHRPSNRQSSFTFHPA. Residues 1–52 constitute a chloroplast transit peptide; the sequence is MALSNASSLSTRSIYGGDLSHRPSNRQSSFTFHPAVNTKPKSVNLVTAVHAA.

This sequence belongs to the class-II DAHP synthase family.

It localises to the plastid. The protein localises to the chloroplast. The enzyme catalyses D-erythrose 4-phosphate + phosphoenolpyruvate + H2O = 7-phospho-2-dehydro-3-deoxy-D-arabino-heptonate + phosphate. Its pathway is metabolic intermediate biosynthesis; chorismate biosynthesis; chorismate from D-erythrose 4-phosphate and phosphoenolpyruvate: step 1/7. The sequence is that of Phospho-2-dehydro-3-deoxyheptonate aldolase 1, chloroplastic (DHS1) from Arabidopsis thaliana (Mouse-ear cress).